Reading from the N-terminus, the 562-residue chain is MDDNKRPLYLPFAGPAILESPLLNKGSAFSEEERIYFNLEGLIPWVIETIDEQAARAYAQFKNFTNDLDKHIYLRNIQDTNETLFYRLVRNNISEMMPIIYTPTVGLACERFSKNYRRNRGLFISYPNKDRIDDILNNSTRHKVKVIVVTDGERILGLGDQGIGGMGIPIGKLSLYTSCGGISPAYCLAVTLDVGTDNPQLLEDPMYMGWRHQRIGGDEYAEFVEEFMQAVSRRWPDALIQFEDFAQKNAMPLLERYKDQYCSFNDDIQGTAAVTVGSLLAACKAANSKLSEQRITFLGAGSAGCGIAEAIVATMVSEGISDQQARSQVFMVDRWGLLLDNMPNLLPFQQKLAQPCATIEAWDNYSDNISLLDVVNNAKPTVLIGVSGSPGLFTEEIIKAMHSHCKRPIVFPLSNPTSRVEATPKDILNWTSGQALVATGSPFEPVIVNGETFEIAQCNNSFIFPGIGLGVLSCGARRVSDEMLMASSRALAECSPLGKDGVGSLLPRLEDIQTVSKYIAFAVAKAAIDQGLALPCTDELLQQSIEANFWEPEYRRYKRTSF.

The active-site Proton donor is Y101. R154 provides a ligand contact to NAD(+). Catalysis depends on K172, which acts as the Proton acceptor. A divalent metal cation is bound by residues E243, D244, and D267. NAD(+)-binding residues include D267 and N415.

The protein belongs to the malic enzymes family. Homotetramer. Requires Mg(2+) as cofactor. The cofactor is Mn(2+).

It carries out the reaction (S)-malate + NAD(+) = pyruvate + CO2 + NADH. The catalysed reaction is oxaloacetate + H(+) = pyruvate + CO2. In Shewanella frigidimarina (strain NCIMB 400), this protein is NAD-dependent malic enzyme.